The following is a 1561-amino-acid chain: Formin-E (1561 aa).

Residues 1–28 (MDNHSSSSNPSSLSSSSSSSSSSSSFLS) are compositionally biased toward low complexity. Disordered regions lie at residues 1-63 (MDNH…EEKP), 77-187 (EEEE…GKLS), 211-279 (PIIV…SSED), and 305-365 (ILRS…NLNY). Residues 29 to 51 (DHVKKEEQNGLDTIKEEIENKIE) show a composition bias toward basic and acidic residues. Residues 32-85 (KKEEQNGLDTIKEEIENKIENEEEEEKIEEKPIEKVEEEKIIVQKEEEEKIEEE) are a coiled coil. Residues 80–89 (EKIEEEPIEK) show a composition bias toward acidic residues. The span at 103–120 (DNINTTVEAKTLETSTEP) shows a compositional bias: polar residues. Positions 158 to 208 (EQQEQQEKQKEETKPSIREEVKEKIKGKLSEIKEEIKDIKEEIKHVIREEV) form a coiled coil. A compositionally biased stretch (basic and acidic residues) spans 162–187 (QQEKQKEETKPSIREEVKEKIKGKLS). A compositionally biased stretch (pro residues) spans 220 to 229 (SPPPPPPPPS). Over residues 230 to 258 (ITVQSSSPVSSQISSPVSSPVSSPKPSVT) the composition is skewed to low complexity. Over residues 305 to 320 (ILRSKSSPNPGANNPN) the composition is skewed to polar residues. A compositionally biased stretch (low complexity) spans 326–365 (NNSSSSSSSNNNSDNNNNSDNNSNNNNINNNNSSSNNLNY). The segment at 379-427 (YHDFKIHRGTSSCVYCGENTRLWSTSYKCFFCGVVCHKKCLDSMNTIPC) adopts a Phorbol-ester/DAG-type zinc-finger fold. A compositionally biased stretch (low complexity) spans 465-534 (PSSITNSSSK…TSISSPPIAS (70 aa)). The segment at 465–549 (PSSITNSSSK…PLLQQQQQQQ (85 aa)) is disordered. The stretch at 541 to 573 (LLQQQQQQQQQQQQQQQQQQQQQQQQQQISTTQ) forms a coiled coil. Positions 581 to 929 (SEKPDDDMIN…QISLHKGGFE (349 aa)) constitute a GBD/FH3 domain. Positions 952–989 (LNRKLGELEKQNIDKAMKIQEQDINIKSLLDLLKQLKD) form a coiled coil. Disordered regions lie at residues 1009-1092 (MEPP…VPKP), 1466-1508 (EEKR…SDED), and 1526-1561 (RQAKGRRRTTHQIATSKMISNNLDPSKILPTSPNKN). Residues 1017–1033 (SVKSPDDPNNAAPIVVA) show a composition bias toward low complexity. The 63-residue stretch at 1019 to 1081 (KSPDDPNNAA…LGAKKPPAGV (63 aa)) folds into the FH1 domain. Residues 1034-1070 (PIPPPPPPISGAPPPPPPPPPPMKGGAGPPPPPPPPG) show a composition bias toward pro residues. Residues 1071–1081 (KLGAKKPPAGV) show a composition bias toward low complexity. One can recognise an FH2 domain in the interval 1086 to 1475 (PPKVPKPSHP…EEKRLQQKQQ (390 aa)). Residues 1398–1491 (LATASTEVEK…RKLTTSNESA (94 aa)) adopt a coiled-coil conformation. Residues 1466 to 1481 (EEKRLQQKQQRQERAV) show a composition bias toward basic and acidic residues. 2 stretches are compositionally biased toward polar residues: residues 1484 to 1498 (LTTSNESASASPNHA) and 1536 to 1561 (HQIATSKMISNNLDPSKILPTSPNKN). The region spanning 1488–1518 (NESASASPNHAKSTDDKSDEDDDIVNDLLMA) is the DAD domain.

It belongs to the formin homology family. Diaphanous subfamily. Interacts (via GBD/FH3 domain) with activated Rho-GTPases.

Its function is as follows. Formins play an important role in the nucleation of actin and the formation of linear actin filaments. In Dictyostelium discoideum (Social amoeba), this protein is Formin-E (forE).